The sequence spans 101 residues: Phosphoribosyl-AMP cyclohydrolase (101 aa).

Asp71 lines the Mg(2+) pocket. Position 72 (Cys72) interacts with Zn(2+). Residues Asp73 and Asp75 each coordinate Mg(2+). Residues Cys88 and Cys95 each coordinate Zn(2+).

The protein belongs to the PRA-CH family. Homodimer. The cofactor is Mg(2+). Zn(2+) serves as cofactor.

It localises to the cytoplasm. It carries out the reaction 1-(5-phospho-beta-D-ribosyl)-5'-AMP + H2O = 1-(5-phospho-beta-D-ribosyl)-5-[(5-phospho-beta-D-ribosylamino)methylideneamino]imidazole-4-carboxamide. It functions in the pathway amino-acid biosynthesis; L-histidine biosynthesis; L-histidine from 5-phospho-alpha-D-ribose 1-diphosphate: step 3/9. Functionally, catalyzes the hydrolysis of the adenine ring of phosphoribosyl-AMP. This Bacillus cereus (strain AH187) protein is Phosphoribosyl-AMP cyclohydrolase.